The sequence spans 31 residues: Photosystem II reaction center protein T (31 aa).

Residues 3–23 (SFAYVLILTFAIATLFFAIAF) form a helical membrane-spanning segment.

The protein belongs to the PsbT family. PSII is composed of 1 copy each of membrane proteins PsbA, PsbB, PsbC, PsbD, PsbE, PsbF, PsbH, PsbI, PsbJ, PsbK, PsbL, PsbM, PsbT, PsbX, PsbY, PsbZ, Psb30/Ycf12, peripheral proteins PsbO, CyanoQ (PsbQ), PsbU, PsbV and a large number of cofactors. It forms dimeric complexes.

It localises to the cellular thylakoid membrane. Functionally, found at the monomer-monomer interface of the photosystem II (PS II) dimer, plays a role in assembly and dimerization of PSII. PSII is a light-driven water plastoquinone oxidoreductase, using light energy to abstract electrons from H(2)O, generating a proton gradient subsequently used for ATP formation. The chain is Photosystem II reaction center protein T from Synechococcus sp. (strain CC9902).